Here is a 271-residue protein sequence, read N- to C-terminus: Acetyl-coenzyme A carboxylase carboxyl transferase subunit alpha (271 aa).

One can recognise a CoA carboxyltransferase C-terminal domain in the interval 1-247 (MSRELIRTAD…KKTILEALGE (247 aa)).

Belongs to the AccA family. As to quaternary structure, acetyl-CoA carboxylase is a heterohexamer composed of biotin carboxyl carrier protein (AccB), biotin carboxylase (AccC) and two subunits each of ACCase subunit alpha (AccA) and ACCase subunit beta (AccD).

The protein localises to the cytoplasm. It carries out the reaction N(6)-carboxybiotinyl-L-lysyl-[protein] + acetyl-CoA = N(6)-biotinyl-L-lysyl-[protein] + malonyl-CoA. Its pathway is lipid metabolism; malonyl-CoA biosynthesis; malonyl-CoA from acetyl-CoA: step 1/1. In terms of biological role, component of the acetyl coenzyme A carboxylase (ACC) complex. First, biotin carboxylase catalyzes the carboxylation of biotin on its carrier protein (BCCP) and then the CO(2) group is transferred by the carboxyltransferase to acetyl-CoA to form malonyl-CoA. The chain is Acetyl-coenzyme A carboxylase carboxyl transferase subunit alpha from Clostridium perfringens (strain 13 / Type A).